A 272-amino-acid polypeptide reads, in one-letter code: Putative pyruvate, phosphate dikinase regulatory protein 1 (272 aa).

151–158 (GISRTSKT) is an ADP binding site.

Belongs to the pyruvate, phosphate/water dikinase regulatory protein family. PDRP subfamily.

The catalysed reaction is N(tele)-phospho-L-histidyl/L-threonyl-[pyruvate, phosphate dikinase] + ADP = N(tele)-phospho-L-histidyl/O-phospho-L-threonyl-[pyruvate, phosphate dikinase] + AMP + H(+). It carries out the reaction N(tele)-phospho-L-histidyl/O-phospho-L-threonyl-[pyruvate, phosphate dikinase] + phosphate + H(+) = N(tele)-phospho-L-histidyl/L-threonyl-[pyruvate, phosphate dikinase] + diphosphate. Functionally, bifunctional serine/threonine kinase and phosphorylase involved in the regulation of the pyruvate, phosphate dikinase (PPDK) by catalyzing its phosphorylation/dephosphorylation. The chain is Putative pyruvate, phosphate dikinase regulatory protein 1 from Staphylococcus epidermidis (strain ATCC 35984 / DSM 28319 / BCRC 17069 / CCUG 31568 / BM 3577 / RP62A).